Reading from the N-terminus, the 315-residue chain is Methionyl-tRNA formyltransferase (315 aa).

113–116 (SLLP) contacts (6S)-5,6,7,8-tetrahydrofolate.

This sequence belongs to the Fmt family.

The enzyme catalyses L-methionyl-tRNA(fMet) + (6R)-10-formyltetrahydrofolate = N-formyl-L-methionyl-tRNA(fMet) + (6S)-5,6,7,8-tetrahydrofolate + H(+). Its function is as follows. Attaches a formyl group to the free amino group of methionyl-tRNA(fMet). The formyl group appears to play a dual role in the initiator identity of N-formylmethionyl-tRNA by promoting its recognition by IF2 and preventing the misappropriation of this tRNA by the elongation apparatus. This Shigella boydii serotype 4 (strain Sb227) protein is Methionyl-tRNA formyltransferase.